The sequence spans 173 residues: Large ribosomal subunit protein uL10 (173 aa).

This sequence belongs to the universal ribosomal protein uL10 family. Part of the ribosomal stalk of the 50S ribosomal subunit. The N-terminus interacts with L11 and the large rRNA to form the base of the stalk. The C-terminus forms an elongated spine to which L12 dimers bind in a sequential fashion forming a multimeric L10(L12)X complex.

Its function is as follows. Forms part of the ribosomal stalk, playing a central role in the interaction of the ribosome with GTP-bound translation factors. The chain is Large ribosomal subunit protein uL10 from Corynebacterium aurimucosum (strain ATCC 700975 / DSM 44827 / CIP 107346 / CN-1) (Corynebacterium nigricans).